The sequence spans 354 residues: Methionine import ATP-binding protein MetN (354 aa).

The ABC transporter domain occupies 8-250 (LDHIDITFHQ…PREDLTKDFI (243 aa)). Residue 42-49 (GYSGAGKS) participates in ATP binding.

The protein belongs to the ABC transporter superfamily. Methionine importer (TC 3.A.1.24) family. The complex is composed of two ATP-binding proteins (MetN), two transmembrane proteins (MetI) and a solute-binding protein (MetQ).

The protein resides in the cell membrane. The enzyme catalyses L-methionine(out) + ATP + H2O = L-methionine(in) + ADP + phosphate + H(+). It catalyses the reaction D-methionine(out) + ATP + H2O = D-methionine(in) + ADP + phosphate + H(+). In terms of biological role, part of the ABC transporter complex MetNIQ involved in methionine import. Responsible for energy coupling to the transport system. This chain is Methionine import ATP-binding protein MetN, found in Streptococcus mutans serotype c (strain ATCC 700610 / UA159).